A 114-amino-acid chain; its full sequence is T cell receptor beta variable 4-1 (114 aa).

The signal sequence occupies residues 1-21; it reads MGCRLLCCAVLCLLGAVPIDT. The 93-residue stretch at 22 to 114 folds into the Ig-like domain; sequence EVTQTPKHLV…SALYLCASSQ (93 aa). The cysteines at positions 42 and 110 are disulfide-linked. N-linked (GlcNAc...) asparagine glycosylation is found at N76 and N89.

As to quaternary structure, alpha-beta TR is a heterodimer composed of an alpha and beta chain; disulfide-linked. The alpha-beta TR is associated with the transmembrane signaling CD3 coreceptor proteins to form the TR-CD3 (TcR or TCR). The assembly of alpha-beta TR heterodimers with CD3 occurs in the endoplasmic reticulum where a single alpha-beta TR heterodimer associates with one CD3D-CD3E heterodimer, one CD3G-CD3E heterodimer and one CD247 homodimer forming a stable octameric structure. CD3D-CD3E and CD3G-CD3E heterodimers preferentially associate with TR alpha and TR beta chains, respectively. The association of the CD247 homodimer is the last step of TcR assembly in the endoplasmic reticulum and is required for transport to the cell surface.

Its subcellular location is the cell membrane. Its function is as follows. V region of the variable domain of T cell receptor (TR) beta chain that participates in the antigen recognition. Alpha-beta T cell receptors are antigen specific receptors which are essential to the immune response and are present on the cell surface of T lymphocytes. Recognize peptide-major histocompatibility (MH) (pMH) complexes that are displayed by antigen presenting cells (APC), a prerequisite for efficient T cell adaptive immunity against pathogens. Binding of alpha-beta TR to pMH complex initiates TR-CD3 clustering on the cell surface and intracellular activation of LCK that phosphorylates the ITAM motifs of CD3G, CD3D, CD3E and CD247 enabling the recruitment of ZAP70. In turn ZAP70 phosphorylates LAT, which recruits numerous signaling molecules to form the LAT signalosome. The LAT signalosome propagates signal branching to three major signaling pathways, the calcium, the mitogen-activated protein kinase (MAPK) kinase and the nuclear factor NF-kappa-B (NF-kB) pathways, leading to the mobilization of transcription factors that are critical for gene expression and essential for T cell growth and differentiation. The T cell repertoire is generated in the thymus, by V-(D)-J rearrangement. This repertoire is then shaped by intrathymic selection events to generate a peripheral T cell pool of self-MH restricted, non-autoaggressive T cells. Post-thymic interaction of alpha-beta TR with the pMH complexes shapes TR structural and functional avidity. The polypeptide is T cell receptor beta variable 4-1 (Homo sapiens (Human)).